A 109-amino-acid polypeptide reads, in one-letter code: Large ribosomal subunit protein eL30 (109 aa).

The protein belongs to the eukaryotic ribosomal protein eL30 family.

In Methanopyrus kandleri (strain AV19 / DSM 6324 / JCM 9639 / NBRC 100938), this protein is Large ribosomal subunit protein eL30.